We begin with the raw amino-acid sequence, 160 residues long: MKRFILLAIATVFFFCQFQTNPVNALELDEATRTVALDETGKTTIVTSKQITNGQRLFVQECTQCHLQGKTKTNNNVSLGLDDLAGAEPPRNNVLALVDYLKHPTSYDGEDNYEELHVNVTRPDLFPELRNFTEDDLYDVAGYVLVAPKLDAYWGGSIYF.

The signal sequence occupies residues 1–25; the sequence is MKRFILLAIATVFFFCQFQTNPVNA. Heme c is bound by residues cysteine 62, cysteine 65, histidine 66, and histidine 117.

This sequence belongs to the cytochrome c family. PsbV subfamily. PSII is composed of 1 copy each of membrane proteins PsbA, PsbB, PsbC, PsbD, PsbE, PsbF, PsbH, PsbI, PsbJ, PsbK, PsbL, PsbM, PsbT, PsbX, PsbY, PsbZ, Psb30/Ycf12, peripheral proteins PsbO, CyanoQ (PsbQ), PsbU, PsbV and a large number of cofactors. It forms dimeric complexes. Requires heme c as cofactor.

The protein localises to the cellular thylakoid membrane. Its function is as follows. One of the extrinsic, lumenal subunits of photosystem II (PSII). PSII is a light-driven water plastoquinone oxidoreductase, using light energy to abstract electrons from H(2)O, generating a proton gradient subsequently used for ATP formation. The extrinsic proteins stabilize the structure of photosystem II oxygen-evolving complex (OEC), the ion environment of oxygen evolution and protect the OEC against heat-induced inactivation. Low-potential cytochrome c that plays a role in the OEC of PSII. In Rippkaea orientalis (strain PCC 8801 / RF-1) (Cyanothece sp. (strain PCC 8801)), this protein is Photosystem II extrinsic protein V.